Here is a 381-residue protein sequence, read N- to C-terminus: Arginine biosynthesis bifunctional protein ArgJ (381 aa).

6 residues coordinate substrate: Thr143, Lys165, Thr176, Glu255, Asn376, and Thr381. Catalysis depends on Thr176, which acts as the Nucleophile.

Belongs to the ArgJ family. As to quaternary structure, heterotetramer of two alpha and two beta chains.

The protein localises to the cytoplasm. The enzyme catalyses N(2)-acetyl-L-ornithine + L-glutamate = N-acetyl-L-glutamate + L-ornithine. It catalyses the reaction L-glutamate + acetyl-CoA = N-acetyl-L-glutamate + CoA + H(+). It participates in amino-acid biosynthesis; L-arginine biosynthesis; L-ornithine and N-acetyl-L-glutamate from L-glutamate and N(2)-acetyl-L-ornithine (cyclic): step 1/1. It functions in the pathway amino-acid biosynthesis; L-arginine biosynthesis; N(2)-acetyl-L-ornithine from L-glutamate: step 1/4. In terms of biological role, catalyzes two activities which are involved in the cyclic version of arginine biosynthesis: the synthesis of N-acetylglutamate from glutamate and acetyl-CoA as the acetyl donor, and of ornithine by transacetylation between N(2)-acetylornithine and glutamate. The polypeptide is Arginine biosynthesis bifunctional protein ArgJ (Thermus thermophilus (strain ATCC BAA-163 / DSM 7039 / HB27)).